A 238-amino-acid chain; its full sequence is ATP-dependent dethiobiotin synthetase BioD (238 aa).

Gly-12–Val-17 is a binding site for ATP. Thr-16 contacts Mg(2+). Lys-37 is a catalytic residue. A substrate-binding site is contributed by Thr-41. ATP-binding positions include Asp-50, Glu-109–Gly-112, Gly-170–Ser-171, and Pro-200–Gly-202. Residues Asp-50 and Glu-109 each contribute to the Mg(2+) site.

Belongs to the dethiobiotin synthetase family. Homodimer. Mg(2+) is required as a cofactor.

Its subcellular location is the cytoplasm. It catalyses the reaction (7R,8S)-7,8-diammoniononanoate + CO2 + ATP = (4R,5S)-dethiobiotin + ADP + phosphate + 3 H(+). It functions in the pathway cofactor biosynthesis; biotin biosynthesis; biotin from 7,8-diaminononanoate: step 1/2. Its function is as follows. Catalyzes a mechanistically unusual reaction, the ATP-dependent insertion of CO2 between the N7 and N8 nitrogen atoms of 7,8-diaminopelargonic acid (DAPA, also called 7,8-diammoniononanoate) to form a ureido ring. The chain is ATP-dependent dethiobiotin synthetase BioD from Frankia casuarinae (strain DSM 45818 / CECT 9043 / HFP020203 / CcI3).